The sequence spans 442 residues: Galactose/N-acetylgalactosamine-binding lectin CEL-III (442 aa).

Positions 1–10 (MVSLVPCGFA) are cleaved as a propeptide — removed in mature form. Gln-11 is subject to Pyrrolidone carboxylic acid. The has hemagglutinating activity towards rabbit erythrocytes, but no hemolytic activity towards them stretch occupies residues 11–304 (QVLCTNPLDI…DWEVPTATWN (294 aa)). Disulfide bonds link Cys-14/Cys-59, Cys-31/Cys-48, and Cys-72/Cys-88. D-galactose contacts are provided by residues Asp-19 and 33–36 (DIVG). 2 Ricin B-type lectin domains span residues 28-102 (SKQC…RWRL) and 115-245 (EQVA…WSRP). Ca(2+)-binding residues include Asp-33, Ile-34, and Gly-36. Mg(2+) is bound by residues Asn-42 and Ile-43. Asp-49 is a D-galactose binding site. Residue Asp-53 participates in Ca(2+) binding. Residues Asn-82 and Val-83 each contribute to the Mg(2+) site. Residues Val-117 and 131 to 134 (DVEG) each bind D-galactose. Cys-129 and Cys-146 form a disulfide bridge. Ca(2+)-binding residues include Asp-131, Val-132, and Gly-134. Ile-141 contributes to the Mg(2+) binding site. 144 to 147 (YDCQ) lines the D-galactose pocket. The Ca(2+) site is built by Asp-151, Asp-178, Val-179, and Gly-181. An intrachain disulfide couples Cys-176 to Cys-193. 178 to 181 (DVEG) contacts D-galactose. Mg(2+) is bound by residues Asn-187 and Val-188. 191 to 194 (YSCE) is a binding site for D-galactose. Residues Asp-198, Asp-219, Val-220, and Gly-222 each coordinate Ca(2+). Cysteines 217 and 234 form a disulfide. Position 219 to 222 (219 to 222 (DVEG)) interacts with D-galactose. 2 residues coordinate Mg(2+): Asn-228 and Val-229. Residue 232–235 (YRCD) coordinates D-galactose. Asp-239 lines the Ca(2+) pocket. Cystine bridges form between Cys-249-Cys-254 and Cys-264-Cys-281. Residues 261-293 (SNKCLDVSGDQGTGDVGTWQCDGLPDQRFKWVF) form the Ricin B-type lectin 3 domain. Positions 266, 267, and 269 each coordinate Ca(2+). 266–269 (DVSG) contributes to the D-galactose binding site. Mg(2+)-binding residues include Asp-275 and Val-276. D-galactose contacts are provided by residues 279–282 (WQCD) and Asp-286. Asp-286 serves as a coordination point for Ca(2+). A has a strong tendency to self-associate leading to formation of oligomers region spans residues 294–442 (DDWEVPTATW…NEDCTFCTDI (149 aa)). Cystine bridges form between Cys-308-Cys-390, Cys-377-Cys-416, Cys-425-Cys-439, and Cys-431-Cys-436.

As to quaternary structure, oligomerizes in the human and rabbit erythrocyte membranes. Oligomerization is induced by binding of beta-1,4-linked disaccharide ligands such as lactose, lactulose, N-acetyllactosamine and phenyl-beta-D-galactoside, but only a little by N-acetylgalactosamine and galactose, and not at all by melibiose in aqueous solution in the presence of high salt concentration and pH 10. Forms heptamers that assemble into larger 21mer oligomers, which may be inserted as a transmembrane pore to the erythrocyte membrane. Ca(2+) is required as a cofactor. The cofactor is Mg(2+). Expressed in body fluid (at protein level).

It is found in the secreted. With respect to regulation, ca(2+) is required for hemolytic activity and the activity increases with increasing calcium concentration. Hemolytic activity is inhibited by N-acetylgalactosamine (GalNAc), lactose, lactulose, galactosamine, dextran with molecular masses greater than 4 kDa, to a lesser extent by inulin and only slightly by sucrose and melezitose, but not by glucose or mannose. The activity is abolished in the presence of 10 mM EDTA. Lactose-binding increases with increasing calcium concentration, but calcium has no effect on hemagglutinating activity. Cytotoxic effect on Madin-Darby canine kidney (MDCK) cell line is strongly inhibited by galactose, lactose and N-acetylgalactosamine (GalNAc), but not by raffinose, N-acetylglucosamine (GlcNAc), glucose, mannose, ribose or sucrose. Pore formation in artificial lactosyl ceramide (LacCer) or globotetraosylceramide (Gb4Cer) containing liposomes is strongly inhibited by lactose. Its function is as follows. Galactose/N-acetylgalactosamine (Gal/GalNAc)-binding lectin with hemolytic activity. Favors saccharides that have a beta-1,4 linkage at the non-reducing end rather than saccharides having alpha-1,6 or alpha-1,4 linkages. Binds lactose, lactulose, GalNAc, galactosamine, methyl alpha-galactopyranoside, methyl beta-galactopyranoside, N-acetyllactosamine, p-nitrophenyl beta-D-galactopyranoside (pNP-Gal), p-nitrophenyl N-acetyl-beta-D-galactosaminide (pNP-GalNAc), asialofetuin, and human erythrocyte membrane lipids lactosyl ceramide (LacCer) and globoside globotetraosylceramide (Gb4Cer). Binds moderately to galactose, melibiose, raffinose, fucose, methyl alpha-galactoside and methyl beta-galactoside. Binds weakly to glucose, mannose and N-acetylglucosamine (GlcNAc). Has hemolytic activity towards human (A, B and O-type), rabbit and rat erythrocytes, but not towards mouse, chicken or horse erythrocytes. Forms ion-permeable transmembrane pores in the erythrocyte membrane as well as in artificial liposomes containing human erythrocyte membrane lipids LacCer, Gb4Cer and galactosyl ceramide (GalCer) leading to destruction of the membrane. Has hemagglutinating activity towards rabbit, human and rat erythrocytes, and at relatively high concentrations towards chicken and horse erythrocytes, but not towards mouse erythrocytes. Has dose-dependent cytotoxic effect on Madin-Darby canine kidney (MDCK), African green monkey kidney (Vero) and human epithelia carcinoma (HeLa) cell lines, but Chinese hamster ovary (CHO), rat sarcoma (XC) and potoroo rat kangaroo kidney (PtK1) cells are highly resistant to the cytotoxic effect of this protein. Impairs malaria parasite development in malaria parasite infected transgenic A.stephensi mosquitoes expressing this protein specifically in their midguts. Binds to ookinetes and leads to strong dose-dependent inhibition of ookinete formation in vitro. Leads to severely impaired oocyst formation and significantly reduced sporozoite production of rodent malaria parasite P.berghei in the salivary glands of the transgenic mosquitoes. The parasite transmission to uninfected mice (vectorial competence) of these mosquitoes is significantly impaired. Also leads to severely impaired oocyst formation of human malaria parasite P.falciparum in transgenic mosquitoes fed on mature P.falciparum gametocyte cultures. May be involved in defense mechanisms acting as a toxic protein to foreign microorganisms. May act in defense against predators. This is Galactose/N-acetylgalactosamine-binding lectin CEL-III from Pseudocnus echinatus (Sea cucumber).